A 297-amino-acid chain; its full sequence is tRNA uridine(34) hydroxylase (297 aa).

A Rhodanese domain is found at 133-228 (RGEEVVFFDG…YGETFKDQGL (96 aa)). The active-site Cysteine persulfide intermediate is the Cys-188.

The protein belongs to the TrhO family.

It catalyses the reaction uridine(34) in tRNA + AH2 + O2 = 5-hydroxyuridine(34) in tRNA + A + H2O. Functionally, catalyzes oxygen-dependent 5-hydroxyuridine (ho5U) modification at position 34 in tRNAs. This is tRNA uridine(34) hydroxylase from Arthrobacter sp. (strain FB24).